We begin with the raw amino-acid sequence, 1028 residues long: Carbamoyl phosphate synthase large chain (1028 aa).

A carboxyphosphate synthetic domain region spans residues 1-409 (MPPRRDLKKI…ALMKALRGLE (409 aa)). ATP contacts are provided by Arg129, Arg169, Gly175, Gly176, Glu208, Val210, Glu215, Gly241, Val242, His243, Gln285, and Glu299. Residues 133–328 (QEAMQRIGLE…IAKIAALLAV (196 aa)) enclose the ATP-grasp 1 domain. Gln285, Glu299, and Asn301 together coordinate Mg(2+). Mn(2+) is bound by residues Gln285, Glu299, and Asn301. An oligomerization domain region spans residues 410 to 549 (RDVRALAGVR…YSTYELEDEV (140 aa)). The segment at 550–933 (WPSQKPKVVI…AYYKAELGAG (384 aa)) is carbamoyl phosphate synthetic domain. One can recognise an ATP-grasp 2 domain in the interval 674–866 (HALCQRLGIP…LAKLAALIAV (193 aa)). The ATP site is built by Arg710, Arg750, Leu752, Glu757, Gly782, Val783, His784, Ser785, Gln825, and Glu837. Residues Gln825, Glu837, and Asn839 each coordinate Mg(2+). 3 residues coordinate Mn(2+): Gln825, Glu837, and Asn839. The MGS-like domain maps to 934-1028 (QRLPLSGRVR…QDWHQKAPRG (95 aa)). Residues 934 to 1028 (QRLPLSGRVR…QDWHQKAPRG (95 aa)) form an allosteric domain region.

Belongs to the CarB family. In terms of assembly, composed of two chains; the small (or glutamine) chain promotes the hydrolysis of glutamine to ammonia, which is used by the large (or ammonia) chain to synthesize carbamoyl phosphate. Tetramer of heterodimers (alpha,beta)4. Mg(2+) is required as a cofactor. The cofactor is Mn(2+).

The catalysed reaction is hydrogencarbonate + L-glutamine + 2 ATP + H2O = carbamoyl phosphate + L-glutamate + 2 ADP + phosphate + 2 H(+). The enzyme catalyses hydrogencarbonate + NH4(+) + 2 ATP = carbamoyl phosphate + 2 ADP + phosphate + 2 H(+). It functions in the pathway amino-acid biosynthesis; L-arginine biosynthesis; carbamoyl phosphate from bicarbonate: step 1/1. Its pathway is pyrimidine metabolism; UMP biosynthesis via de novo pathway; (S)-dihydroorotate from bicarbonate: step 1/3. In terms of biological role, large subunit of the glutamine-dependent carbamoyl phosphate synthetase (CPSase). CPSase catalyzes the formation of carbamoyl phosphate from the ammonia moiety of glutamine, carbonate, and phosphate donated by ATP, constituting the first step of 2 biosynthetic pathways, one leading to arginine and/or urea and the other to pyrimidine nucleotides. The large subunit (synthetase) binds the substrates ammonia (free or transferred from glutamine from the small subunit), hydrogencarbonate and ATP and carries out an ATP-coupled ligase reaction, activating hydrogencarbonate by forming carboxy phosphate which reacts with ammonia to form carbamoyl phosphate. The chain is Carbamoyl phosphate synthase large chain from Thermus thermophilus (strain ATCC 27634 / DSM 579 / HB8).